Here is a 489-residue protein sequence, read N- to C-terminus: Metal cation symporter ZIP14 (489 aa).

The first 28 residues, 1-28 (MKRLHPALPSCLLLVLFGIWRTAPQTHA), serve as a signal peptide directing secretion. Topologically, residues 29 to 155 (SSAGLPPLSA…PSAIEVWGYG (127 aa)) are extracellular. N-linked (GlcNAc...) asparagine glycans are attached at residues Asn-52, Asn-75, Asn-85, and Asn-100. Residues 156 to 176 (FLCVTVISLCSLMGASVVPFM) form a helical membrane-spanning segment. Topologically, residues 177–184 (KKTFYKRL) are cytoplasmic. A helical transmembrane segment spans residues 185–205 (LLYFIALAIGTLYSNALFQLI). Over 206–221 (PEAFGFNPQDNYVSKS) the chain is Extracellular. The chain crosses the membrane as a helical span at residues 222 to 242 (AVVFGGFYLFFFTEKILKMLL). At 243–349 (KQKNEHHHGH…SDGLHNFIDG (107 aa)) the chain is on the cytoplasmic side. The HHHGHXHX-motif motif lies at 248–255 (HHHGHNHF). The helical transmembrane segment at 350–370 (LAIGASFTVSVFQGISTSVAI) threads the bilayer. Residues 371–394 (LCEEFPHELGDFVILLNAGMSIQQ) lie on the Extracellular side of the membrane. Positions 373 to 378 (EEFPHE) match the XEXPHE-motif motif. The helical transmembrane segment at 395–415 (ALFFNFLSACCCYLGLAFGIL) threads the bilayer. Residues 416–421 (AGSHFS) lie on the Cytoplasmic side of the membrane. Residues 422-442 (ANWIFALAGGMFLYIALADMF) form a helical membrane-spanning segment. Over 443–457 (PEMNEVCQEDEKNDS) the chain is Extracellular. A helical membrane pass occupies residues 458 to 478 (FLVPFVIQNLGLLTGFSIMLV). Topologically, residues 479-489 (LTMYSGQIQIG) are cytoplasmic.

Belongs to the ZIP transporter (TC 2.A.5) family. Homotrimer. Ubiquitinated. Ubiquitination occurs upon iron depletion. The ubiquitinated form undergoes proteasomal degradation. In terms of processing, N-glycosylated. N-glycosylation at Asn-100 is required for iron-regulated extraction of the transporter from membranes and subsequent proteasomal degradation. Widely expressed. Highly and transiently expressed during the early stage of adipocyte differentiation. Strongly expressed in liver, preadipocyte, duodenum and jejunum, moderately in brain, heart, skeletal muscle, spleen, pancreas, kidney and white adipose cells. Expression is almost undetectable in lung, testis and brown adipose cells. Expressed by chondrocytes and pituitary cells. As to expression, more strongly expressed in brain. In terms of tissue distribution, more strongly expressed in liver, kidney and duodenum.

The protein resides in the cell membrane. Its subcellular location is the apical cell membrane. It is found in the basolateral cell membrane. The protein localises to the early endosome membrane. It localises to the late endosome membrane. The protein resides in the lysosome membrane. The catalysed reaction is Zn(2+)(out) + 2 hydrogencarbonate(out) = Zn(2+)(in) + 2 hydrogencarbonate(in). It carries out the reaction Mn(2+)(out) + 2 hydrogencarbonate(out) = Mn(2+)(in) + 2 hydrogencarbonate(in). The enzyme catalyses Fe(2+)(out) + 2 hydrogencarbonate(out) = Fe(2+)(in) + 2 hydrogencarbonate(in). It catalyses the reaction Cd(2+)(out) + 2 hydrogencarbonate(out) = Cd(2+)(in) + 2 hydrogencarbonate(in). With respect to regulation, inhibited by cyanide and therefore dependent of an energy source. Inhibited by DIDS/4,4'-diisothiocyanatostilbene-2,2'-disulfonic acid, an inhibitor hydrogencarbonate-dependent transporters. Functionally, electroneutral transporter of the plasma membrane mediating the cellular uptake of the divalent metal cations zinc, manganese and iron that are important for tissue homeostasis, metabolism, development and immunity. Functions as an energy-dependent symporter, transporting through the membranes an electroneutral complex composed of a divalent metal cation and two bicarbonate anions. Beside these endogenous cellular substrates, can also import cadmium a non-essential metal which is cytotoxic and carcinogenic. Controls the cellular uptake by the intestinal epithelium of systemic zinc, which is in turn required to maintain tight junctions and the intestinal permeability. Modifies the activity of zinc-dependent phosphodiesterases, thereby indirectly regulating G protein-coupled receptor signaling pathways important for gluconeogenesis and chondrocyte differentiation. Regulates insulin receptor signaling, glucose uptake, glycogen synthesis and gluconeogenesis in hepatocytes through the zinc-dependent intracellular catabolism of insulin. Through zinc cellular uptake also plays a role in the adaptation of cells to endoplasmic reticulum stress. Major manganese transporter of the basolateral membrane of intestinal epithelial cells, it plays a central role in manganese systemic homeostasis through intestinal manganese uptake. Also involved in manganese extracellular uptake by cells of the blood-brain barrier. May also play a role in manganese and zinc homeostasis participating in their elimination from the blood through the hepatobiliary excretion. Also functions in the extracellular uptake of free iron. May also function intracellularly and mediate the transport from endosomes to cytosol of iron endocytosed by transferrin. Plays a role in innate immunity by regulating the expression of cytokines by activated macrophages. The protein is Metal cation symporter ZIP14 of Mus musculus (Mouse).